We begin with the raw amino-acid sequence, 661 residues long: Bifunctional polymyxin resistance protein ArnA (661 aa).

Residues M1–I304 form a formyltransferase ArnAFT region. H104 serves as the catalytic Proton donor; for formyltransferase activity. (6R)-10-formyltetrahydrofolate is bound by residues R114 and V136 to D140. Positions R314–P661 are dehydrogenase ArnADH. NAD(+)-binding positions include D347 and D368–I369. Residues A393, Y398, and T432 to S433 each bind UDP-alpha-D-glucuronate. The active-site Proton acceptor; for decarboxylase activity is E434. UDP-alpha-D-glucuronate-binding positions include R460, N492, K526 to R535, and Y613. R619 functions as the Proton donor; for decarboxylase activity in the catalytic mechanism.

The protein in the N-terminal section; belongs to the Fmt family. UDP-L-Ara4N formyltransferase subfamily. It in the C-terminal section; belongs to the NAD(P)-dependent epimerase/dehydratase family. UDP-glucuronic acid decarboxylase subfamily. Homohexamer, formed by a dimer of trimers.

The catalysed reaction is UDP-alpha-D-glucuronate + NAD(+) = UDP-beta-L-threo-pentopyranos-4-ulose + CO2 + NADH. It carries out the reaction UDP-4-amino-4-deoxy-beta-L-arabinose + (6R)-10-formyltetrahydrofolate = UDP-4-deoxy-4-formamido-beta-L-arabinose + (6S)-5,6,7,8-tetrahydrofolate + H(+). Its pathway is nucleotide-sugar biosynthesis; UDP-4-deoxy-4-formamido-beta-L-arabinose biosynthesis; UDP-4-deoxy-4-formamido-beta-L-arabinose from UDP-alpha-D-glucuronate: step 1/3. It functions in the pathway nucleotide-sugar biosynthesis; UDP-4-deoxy-4-formamido-beta-L-arabinose biosynthesis; UDP-4-deoxy-4-formamido-beta-L-arabinose from UDP-alpha-D-glucuronate: step 3/3. The protein operates within bacterial outer membrane biogenesis; lipopolysaccharide biosynthesis. Bifunctional enzyme that catalyzes the oxidative decarboxylation of UDP-glucuronic acid (UDP-GlcUA) to UDP-4-keto-arabinose (UDP-Ara4O) and the addition of a formyl group to UDP-4-amino-4-deoxy-L-arabinose (UDP-L-Ara4N) to form UDP-L-4-formamido-arabinose (UDP-L-Ara4FN). The modified arabinose is attached to lipid A and is required for resistance to polymyxin and cationic antimicrobial peptides. This is Bifunctional polymyxin resistance protein ArnA from Klebsiella pneumoniae subsp. pneumoniae (strain ATCC 700721 / MGH 78578).